The chain runs to 151 residues: Ribosome maturation factor RimP (151 aa).

This sequence belongs to the RimP family.

It is found in the cytoplasm. Required for maturation of 30S ribosomal subunits. This is Ribosome maturation factor RimP from Vibrio cholerae serotype O1 (strain ATCC 39541 / Classical Ogawa 395 / O395).